The chain runs to 189 residues: Mu-like prophage FluMu protein gp27 (189 aa).

It to phage Mu protein gp27.

The polypeptide is Mu-like prophage FluMu protein gp27 (Haemophilus influenzae (strain ATCC 51907 / DSM 11121 / KW20 / Rd)).